The following is an 86-amino-acid chain: Large ribosomal subunit protein bL31B (86 aa).

Belongs to the bacterial ribosomal protein bL31 family. Type B subfamily. Part of the 50S ribosomal subunit.

This Ralstonia pickettii (strain 12J) protein is Large ribosomal subunit protein bL31B.